The following is a 55-amino-acid chain: Large ribosomal subunit protein bL33 (55 aa).

This sequence belongs to the bacterial ribosomal protein bL33 family.

The polypeptide is Large ribosomal subunit protein bL33 (Xanthomonas oryzae pv. oryzae (strain PXO99A)).